Here is a 423-residue protein sequence, read N- to C-terminus: Serine hydroxymethyltransferase (423 aa).

Residue 121 to 123 (GHI) coordinates (6S)-5,6,7,8-tetrahydrofolate. Position 227 is an N6-(pyridoxal phosphate)lysine (Lys-227). Glu-242 serves as a coordination point for (6S)-5,6,7,8-tetrahydrofolate.

It belongs to the SHMT family. In terms of assembly, homodimer. It depends on pyridoxal 5'-phosphate as a cofactor.

Its subcellular location is the cytoplasm. It carries out the reaction 5,10-methylenetetrahydromethanopterin + glycine + H2O = 5,6,7,8-tetrahydromethanopterin + L-serine. The protein operates within amino-acid biosynthesis; glycine biosynthesis; glycine from L-serine: step 1/1. In terms of biological role, catalyzes the reversible interconversion of serine and glycine with tetrahydromethanopterin (H4MPT) serving as the one-carbon carrier. Also exhibits a pteridine-independent aldolase activity toward beta-hydroxyamino acids, producing glycine and aldehydes, via a retro-aldol mechanism. This Methanothermobacter marburgensis (strain ATCC BAA-927 / DSM 2133 / JCM 14651 / NBRC 100331 / OCM 82 / Marburg) (Methanobacterium thermoautotrophicum) protein is Serine hydroxymethyltransferase.